Consider the following 282-residue polypeptide: Para-Rep C1 (282 aa).

Residues 1–99 (MASKRWCFTL…ETLISEIGAP (99 aa)) form the CRESS-DNA virus Rep endonuclease domain. The RCR-1 signature appears at 7–10 (CFTL). Positions 38 and 47 each coordinate a divalent metal cation. The RCR-2 motif lies at 47–49 (HLQ). The Nuclear localization signal signature appears at 56 to 77 (KMIRLGGLKKKFGYRAHWEIAK). Tyrosine 86 acts as the For DNA cleavage activity in catalysis. The short motif at 86–89 (YCTK) is the RCR-3 element. Serine 94 provides a ligand contact to a divalent metal cation. 174 to 182 (GSDGGEGKS) contacts ATP.

This sequence belongs to the nanoviridea/circoviridae replication-associated protein family. In terms of assembly, homooligomer (Potential). Rep binds to repeated DNA motifs (iterons). It depends on Mg(2+) as a cofactor. Mn(2+) is required as a cofactor.

Its subcellular location is the host nucleus. It carries out the reaction ATP + H2O = ADP + phosphate + H(+). Functionally, initiates and terminates the replication only of its own subviral DNA molecule. The closed circular ssDNA genome is first converted to a superhelical dsDNA. Rep binds a specific hairpin at the genome origin of replication. Introduces an endonucleolytic nick within the intergenic region of the genome, thereby initiating the rolling circle replication (RCR). Following cleavage, binds covalently to the 5'-phosphate of DNA as a tyrosyl ester. The cleavage gives rise to a free 3'-OH that serves as a primer for the cellular DNA polymerase. The polymerase synthesizes the (+) strand DNA by rolling circle mechanism. After one round of replication, a Rep-catalyzed nucleotidyl transfer reaction releases a circular single-stranded virus genome, thereby terminating the replication. Displays origin-specific DNA cleavage, nucleotidyl transferase, ATPase and helicase activities. This chain is Para-Rep C1 (C1), found in Faba bean necrotic yellows C11 alphasatellite (FBNYC11A).